A 1409-amino-acid chain; its full sequence is Adhesion and penetration protein autotransporter (1409 aa).

A signal peptide spans 1–25 (MKKTVFRLNFLTACVSLGIASQAWA). Positions 26–294 (GHTYFGIDYQ…LIREEWFYNE (269 aa)) constitute a Peptidase S6 domain. Ser-250 is a catalytic residue. 2 disordered regions span residues 866-888 (YSAS…TPTS) and 1016-1078 (AKQV…SKRA). The segment covering 1057–1067 (VEQTTETQTSK) has biased composition (polar residues). The span at 1068–1077 (PKTKKGRSKR) shows a compositional bias: basic residues. The Autotransporter domain maps to 1156 to 1409 (VDQAQSALWT…NVGVKLGYRW (254 aa)).

The protein resides in the periplasm. The protein localises to the secreted. It localises to the cell surface. It is found in the cell outer membrane. In terms of biological role, probable protease; promotes adherence and invasion by directly binding to a host cell structure. The sequence is that of Adhesion and penetration protein autotransporter (hap) from Haemophilus influenzae (strain ATCC 51907 / DSM 11121 / KW20 / Rd).